Here is a 217-residue protein sequence, read N- to C-terminus: 3-isopropylmalate dehydratase small subunit (217 aa).

It belongs to the LeuD family. LeuD type 1 subfamily. As to quaternary structure, heterodimer of LeuC and LeuD.

The catalysed reaction is (2R,3S)-3-isopropylmalate = (2S)-2-isopropylmalate. It participates in amino-acid biosynthesis; L-leucine biosynthesis; L-leucine from 3-methyl-2-oxobutanoate: step 2/4. In terms of biological role, catalyzes the isomerization between 2-isopropylmalate and 3-isopropylmalate, via the formation of 2-isopropylmaleate. The chain is 3-isopropylmalate dehydratase small subunit from Delftia acidovorans (strain DSM 14801 / SPH-1).